The sequence spans 352 residues: Galactokinase (352 aa).

Substrate is bound at residue 14 to 17 (EHTD). ATP contacts are provided by residues S46 and 96–102 (GAGLSSS). Mg(2+) is bound by residues S102 and E134. The active-site Proton acceptor is the D146. Y196 is a binding site for substrate.

This sequence belongs to the GHMP kinase family. GalK subfamily.

It is found in the cytoplasm. It carries out the reaction alpha-D-galactose + ATP = alpha-D-galactose 1-phosphate + ADP + H(+). It functions in the pathway carbohydrate metabolism; galactose metabolism. Its function is as follows. Catalyzes the transfer of the gamma-phosphate of ATP to D-galactose to form alpha-D-galactose-1-phosphate (Gal-1-P). This Thermosipho africanus (strain TCF52B) protein is Galactokinase.